We begin with the raw amino-acid sequence, 503 residues long: MAAAVATVQRPEAETVEEASNLQWPLPPEHRPSGAATRPGDSEDAPVRPLCKPRGICSRAYFLVLMVFVHLYLGNVLALLLFVHYSNGDESTDPGPQRREQSPQPVPTLGPLTRLEGIKVGYERKVQVVAGRDHFIRTLSLKPLLFEIPGFLSDEECRLIIHLAQMKGLQRSQILPTEEYEEAMSAMQVSQLDLFQLLDQNHDGRLQLREVLAQTRLGNGRWMTPENIQEMYSAIKADPDGDGVLSLQEFSNMDLRDFHKYMRSHKAESNELVRNSHHTWLHQGEGAHHVMRAIRQRVLRLTRLSPEIVEFSEPLQVVRYGEGGHYHAHVDSGPVYPETICSHTKLVANESVPFETSCRYMTVLFYLNNVTGGGETVFPVADNRTYDEMSLIQDDVDLRDTRRHCDKGNLRVKPQQGTAVFWYNYLPDGQGWVGEVDDYSLHGGCLVTRGTKWIANNWINVDPSRARQALFQQEMARLAREGGMDSQPEWALDRAYSDARVEL.

A disordered region spans residues 1–49 (MAAAVATVQRPEAETVEEASNLQWPLPPEHRPSGAATRPGDSEDAPVRP). Topologically, residues 1 to 61 (MAAAVATVQR…KPRGICSRAY (61 aa)) are cytoplasmic. A helical; Signal-anchor for type II membrane protein membrane pass occupies residues 62–82 (FLVLMVFVHLYLGNVLALLLF). Residues 83–503 (VHYSNGDEST…RAYSDARVEL (421 aa)) are Lumenal-facing. The interval 90–110 (ESTDPGPQRREQSPQPVPTLG) is disordered. EF-hand domains lie at 186-221 (AMQVSQLDLFQLLDQNHDGRLQLREVLAQTRLGNGR) and 225-260 (PENIQEMYSAIKADPDGDGVLSLQEFSNMDLRDFHK). Ca(2+) contacts are provided by D199, N201, D203, R205, E210, D238, D240, D242, and E249. The region spanning 310 to 461 (EFSEPLQVVR…KWIANNWINV (152 aa)) is the Fe2OG dioxygenase domain. Residues H329 and D331 each coordinate Fe cation. 2 N-linked (GlcNAc...) asparagine glycosylation sites follow: N349 and N369. E375 lines the Fe cation pocket. N383 is a glycosylation site (N-linked (GlcNAc...) asparagine). 2-oxoglutarate is bound at residue K452.

In terms of assembly, homodimer. Fe(2+) is required as a cofactor. It depends on L-ascorbate as a cofactor. Glycosylated. In terms of tissue distribution, highest expression levels are detected in the eye and brain, especially in the retinal epithelium cells and cortical neurons. Also expressed in skeletal muscle, lung, heart, adrenal gland, kidney, prostate, thyroid and testis.

It is found in the endoplasmic reticulum membrane. The catalysed reaction is L-prolyl-[hypoxia-inducible factor alpha subunit] + 2-oxoglutarate + O2 = trans-4-hydroxy-L-prolyl-[hypoxia-inducible factor alpha subunit] + succinate + CO2. Functionally, catalyzes the post-translational formation of 4-hydroxyproline in hypoxia-inducible factor (HIF) alpha proteins. Hydroxylates HIF1A at 'Pro-402' and 'Pro-564'. May function as a cellular oxygen sensor and, under normoxic conditions, may target HIF through the hydroxylation for proteasomal degradation via the von Hippel-Lindau ubiquitination complex. This is Transmembrane prolyl 4-hydroxylase (P4htm) from Mus musculus (Mouse).